The primary structure comprises 505 residues: Glycerol kinase (505 aa).

Residue threonine 14 participates in ADP binding. The ATP site is built by threonine 14, threonine 15, and serine 16. Sn-glycerol 3-phosphate is bound at residue threonine 14. Residue arginine 18 participates in ADP binding. Sn-glycerol 3-phosphate contacts are provided by arginine 84, glutamate 85, tyrosine 136, and aspartate 246. Positions 84, 85, 136, 246, and 247 each coordinate glycerol. 2 residues coordinate ADP: threonine 268 and glycine 311. The ATP site is built by threonine 268, glycine 311, glutamine 315, and glycine 412. 2 residues coordinate ADP: glycine 412 and asparagine 416.

This sequence belongs to the FGGY kinase family.

It catalyses the reaction glycerol + ATP = sn-glycerol 3-phosphate + ADP + H(+). It functions in the pathway polyol metabolism; glycerol degradation via glycerol kinase pathway; sn-glycerol 3-phosphate from glycerol: step 1/1. Inhibited by fructose 1,6-bisphosphate (FBP). Its function is as follows. Key enzyme in the regulation of glycerol uptake and metabolism. Catalyzes the phosphorylation of glycerol to yield sn-glycerol 3-phosphate. The sequence is that of Glycerol kinase from Vibrio vulnificus (strain CMCP6).